Consider the following 124-residue polypeptide: Small ribosomal subunit protein uS12 (124 aa).

3-methylthioaspartic acid is present on Asp89.

It belongs to the universal ribosomal protein uS12 family. In terms of assembly, part of the 30S ribosomal subunit. Contacts proteins S8 and S17. May interact with IF1 in the 30S initiation complex.

Functionally, with S4 and S5 plays an important role in translational accuracy. In terms of biological role, interacts with and stabilizes bases of the 16S rRNA that are involved in tRNA selection in the A site and with the mRNA backbone. Located at the interface of the 30S and 50S subunits, it traverses the body of the 30S subunit contacting proteins on the other side and probably holding the rRNA structure together. The combined cluster of proteins S8, S12 and S17 appears to hold together the shoulder and platform of the 30S subunit. In Proteus mirabilis (strain HI4320), this protein is Small ribosomal subunit protein uS12.